Reading from the N-terminus, the 407-residue chain is Imidazolonepropionase (407 aa).

The Fe(3+) site is built by His-68 and His-70. Zn(2+) is bound by residues His-68 and His-70. Residues Arg-77, Tyr-140, and His-173 each coordinate 4-imidazolone-5-propanoate. Tyr-140 lines the N-formimidoyl-L-glutamate pocket. Position 238 (His-238) interacts with Fe(3+). Position 238 (His-238) interacts with Zn(2+). 4-imidazolone-5-propanoate is bound at residue Gln-241. Residue Asp-313 participates in Fe(3+) binding. Position 313 (Asp-313) interacts with Zn(2+). N-formimidoyl-L-glutamate is bound by residues Asn-315 and Gly-317. Thr-318 contributes to the 4-imidazolone-5-propanoate binding site.

The protein belongs to the metallo-dependent hydrolases superfamily. HutI family. Zn(2+) is required as a cofactor. It depends on Fe(3+) as a cofactor.

The protein resides in the cytoplasm. It carries out the reaction 4-imidazolone-5-propanoate + H2O = N-formimidoyl-L-glutamate. It functions in the pathway amino-acid degradation; L-histidine degradation into L-glutamate; N-formimidoyl-L-glutamate from L-histidine: step 3/3. Its function is as follows. Catalyzes the hydrolytic cleavage of the carbon-nitrogen bond in imidazolone-5-propanoate to yield N-formimidoyl-L-glutamate. It is the third step in the universal histidine degradation pathway. The sequence is that of Imidazolonepropionase from Burkholderia orbicola (strain MC0-3).